Reading from the N-terminus, the 323-residue chain is Beta-ketoacyl-[acyl-carrier-protein] synthase III (323 aa).

Catalysis depends on residues C114 and H250. Positions 251–255 (QANIR) are ACP-binding. Residue N280 is part of the active site.

Belongs to the thiolase-like superfamily. FabH family. In terms of assembly, homodimer.

The protein localises to the cytoplasm. It carries out the reaction malonyl-[ACP] + acetyl-CoA + H(+) = 3-oxobutanoyl-[ACP] + CO2 + CoA. It participates in lipid metabolism; fatty acid biosynthesis. In terms of biological role, catalyzes the condensation reaction of fatty acid synthesis by the addition to an acyl acceptor of two carbons from malonyl-ACP. Catalyzes the first condensation reaction which initiates fatty acid synthesis and may therefore play a role in governing the total rate of fatty acid production. Possesses both acetoacetyl-ACP synthase and acetyl transacylase activities. Its substrate specificity determines the biosynthesis of branched-chain and/or straight-chain of fatty acids. In Ruegeria pomeroyi (strain ATCC 700808 / DSM 15171 / DSS-3) (Silicibacter pomeroyi), this protein is Beta-ketoacyl-[acyl-carrier-protein] synthase III.